Here is a 522-residue protein sequence, read N- to C-terminus: Leucine-rich repeat transmembrane neuronal protein 1 (522 aa).

The first 34 residues, 1 to 34 (MDFLLLGLCLYWLLRRPSGVVLCLLGACFQMLPA), serve as a signal peptide directing secretion. Positions 35–63 (APSGCPQLCRCEGRLLYCEALNLTEAPHN) constitute an LRRNT domain. The Extracellular portion of the chain corresponds to 35 to 427 (APSGCPQLCR…HAENAVQIHK (393 aa)). N56 and N63 each carry an N-linked (GlcNAc...) asparagine glycan. LRR repeat units lie at residues 64–87 (LSGL…QFTG), 89–111 (MQLT…AFQK), 112–135 (LRRV…TFRP), 137–159 (PNLR…LFHG), 161–183 (RKLT…IFQD), 184–207 (CRSL…SFAG), 209–231 (FKLT…HFPR), 233–255 (ISLH…LDWV), 256–278 (WNLE…VFET), and 279–302 (VPHL…ILNS). A glycan (N-linked (GlcNAc...) asparagine) is linked at N130. Residues 314–365 (NLWDCGRNVCALASWLNNFQGRYDGNLQCASPEYAQGEDVLDAVYAFHLCED) enclose the LRRCT domain. An N-linked (GlcNAc...) asparagine glycan is attached at N380. The segment at 382–401 (SDLGPPASSATTLADGGEGQ) is disordered. A helical membrane pass occupies residues 428-448 (VVTGTMALIFSFLIVVLVLYV). Residues 449–522 (SWKCFPASLR…HQQPARECEV (74 aa)) lie on the Cytoplasmic side of the membrane.

The protein belongs to the LRRTM family. Predominantly expressed in forebrain regions including thalamus and cerebral cortex.

It is found in the cell membrane. The protein resides in the postsynaptic cell membrane. In terms of biological role, exhibits strong synaptogenic activity, restricted to excitatory presynaptic differentiation, acting at both pre- and postsynaptic level. This Homo sapiens (Human) protein is Leucine-rich repeat transmembrane neuronal protein 1 (LRRTM1).